Here is a 719-residue protein sequence, read N- to C-terminus: Fatty acid oxidation complex subunit alpha (719 aa).

Residues 1 to 190 form an enoyl-CoA hydratase/isomerase region; sequence MIYQGNRITV…KLGLVDAVVA (190 aa). Asp-298 contributes to the substrate binding site. Residues 313 to 719 form a 3-hydroxyacyl-CoA dehydrogenase region; the sequence is HDINEAAVLG…AAGETFYPKA (407 aa). NAD(+) contacts are provided by residues Met-326, Asp-345, 402 to 404, Lys-409, and Ser-431; that span reads VVE. His-452 acts as the For 3-hydroxyacyl-CoA dehydrogenase activity in catalysis. Asn-455 contributes to the NAD(+) binding site. Residue Asn-502 participates in substrate binding.

The protein in the N-terminal section; belongs to the enoyl-CoA hydratase/isomerase family. In the C-terminal section; belongs to the 3-hydroxyacyl-CoA dehydrogenase family. In terms of assembly, heterotetramer of two alpha chains (FadB) and two beta chains (FadA).

The catalysed reaction is a (3S)-3-hydroxyacyl-CoA + NAD(+) = a 3-oxoacyl-CoA + NADH + H(+). The enzyme catalyses a (3S)-3-hydroxyacyl-CoA = a (2E)-enoyl-CoA + H2O. It carries out the reaction a 4-saturated-(3S)-3-hydroxyacyl-CoA = a (3E)-enoyl-CoA + H2O. It catalyses the reaction (3S)-3-hydroxybutanoyl-CoA = (3R)-3-hydroxybutanoyl-CoA. The catalysed reaction is a (3Z)-enoyl-CoA = a 4-saturated (2E)-enoyl-CoA. The enzyme catalyses a (3E)-enoyl-CoA = a 4-saturated (2E)-enoyl-CoA. It functions in the pathway lipid metabolism; fatty acid beta-oxidation. Its function is as follows. Involved in the aerobic and anaerobic degradation of long-chain fatty acids via beta-oxidation cycle. Catalyzes the formation of 3-oxoacyl-CoA from enoyl-CoA via L-3-hydroxyacyl-CoA. It can also use D-3-hydroxyacyl-CoA and cis-3-enoyl-CoA as substrate. The chain is Fatty acid oxidation complex subunit alpha from Psychrobacter sp. (strain PRwf-1).